Reading from the N-terminus, the 75-residue chain is Beta-defensin 30 (75 aa).

Positions 1–22 (MGSLQLILVLFVLLSDVPPVRS) are cleaved as a signal peptide. 3 cysteine pairs are disulfide-bonded: Cys-35/Cys-62, Cys-42/Cys-56, and Cys-46/Cys-63.

Belongs to the beta-defensin family.

The protein localises to the secreted. Has antibacterial activity. The polypeptide is Beta-defensin 30 (Defb30) (Rattus norvegicus (Rat)).